We begin with the raw amino-acid sequence, 386 residues long: Enoyl-[acyl-carrier-protein] reductase 1, mitochondrial (386 aa).

The transit peptide at 1–22 (MYSVLKQSIRPRLLATHNQFRT) directs the protein to the mitochondrion. Residue Tyr-79 is the Proton donor of the active site. Residues Asn-172, 199 to 202 (TSAV), 222 to 224 (RDR), 296 to 299 (YGGM), 321 to 323 (FWV), and Lys-381 each bind NADP(+).

It belongs to the zinc-containing alcohol dehydrogenase family. Quinone oxidoreductase subfamily. Homodimer and heterodimer with ETR2.

The protein localises to the mitochondrion. The enzyme catalyses a 2,3-saturated acyl-[ACP] + NADP(+) = a (2E)-enoyl-[ACP] + NADPH + H(+). It catalyses the reaction (2E,4E)-hexadienoyl-CoA + NADPH + H(+) = (4E)-hexenoyl-CoA + NADP(+). It carries out the reaction (2E)-hexenoyl-CoA + NADPH + H(+) = hexanoyl-CoA + NADP(+). In terms of biological role, catalyzes the NADPH-dependent reduction of trans-2-enoyl thioesters in mitochondrial fatty acid synthesis (fatty acid synthesis type II). Fatty acid chain elongation in mitochondria uses acyl carrier protein (ACP) as an acyl group carrier, but the enzyme accepts both ACP and CoA thioesters as substrates in vitro. Required for respiration and the maintenance of the mitochondrial compartment. The protein is Enoyl-[acyl-carrier-protein] reductase 1, mitochondrial (ETR1) of Candida tropicalis (Yeast).